Reading from the N-terminus, the 822-residue chain is Epidermal growth factor receptor kinase substrate 8 (822 aa).

Composition is skewed to polar residues over residues 1–10 and 17–30; these read MNGHISNHPS and SQMN…TFSQ. The interval 1 to 39 is disordered; the sequence is MNGHISNHPSSFGMYPSQMNGYGSSPTFSQTDREHGSKT. Serine 58 is subject to Phosphoserine. A PTB domain is found at 64–194; that stretch reads QYRVEHLTTF…SDSKGGKQKR (131 aa). 2 disordered regions span residues 202-225 and 298-320; these read ISNA…GTVT and SKRK…TLRA. A compositionally biased stretch (pro residues) spans 208-221; sequence SIPPPPRAPAPAPP. At threonine 223 the chain carries Phosphothreonine. Basic residues predominate over residues 299 to 309; that stretch reads KRKKNKKGKRK. At threonine 317 the chain carries Phosphothreonine. Serine 476 carries the post-translational modification Phosphoserine. The SH3 domain occupies 531 to 590; the sequence is QPKKYAKSKYDFVARNNSELSVLKDDILEILDDRKQWWKVRNASGDSGFVPNNILDIVRP. The tract at residues 612–689 is disordered; sequence EYGPRPADTP…VDRRKSQMEE (78 aa). Positions 618–645 are enriched in pro residues; that stretch reads ADTPPAPSPPPTPAPVPVPLPPSTPAPV. Phosphoserine is present on serine 625. The residue at position 629 (threonine 629) is a Phosphothreonine; by MAPK. Positions 649–822 are effector region; that stretch reads KVPANITRQN…VESFDEGSSH (174 aa). Phosphoserine occurs at positions 659, 662, and 685. Residues 671–687 are compositionally biased toward basic and acidic residues; the sequence is DSQRHKQLPVDRRKSQM. The amphipathic helix stretch occupies residues 680 to 698; sequence VDRRKSQMEEVQDELIHRL. 4 helix bundle regions span residues 718–738, 752–757, 762–767, and 766–785; these read VINI…QSKG, GAQLFS, ELRTVC, and VCPE…AALE. Positions 787-822 are disordered; that stretch reads SSGSSELQEIMRRRQEKISAAASDSGVESFDEGSSH. Residues serine 811 and serine 815 each carry the phosphoserine modification.

Belongs to the EPS8 family. As to quaternary structure, homodimer. Part of a complex consisting of ABI1, EPS8 and SOS1. Interacts with MYO15A and WHRN. Interacts with LANCL1. Interacts with EGFR; mediates EPS8 phosphorylation. Interacts with BAIAP2. Interacts with SHB. In terms of processing, ubiquitinated by the SCF(FBXW5) E3 ubiquitin-protein ligase complex during G2 phase, leading to its transient degradation and subsequent cell shape changes required to allow mitotic progression. Reappears at the midzone of dividing cells. Phosphorylation at Ser-625 and Thr-629 by MAPK following BDNF treatment promotes removal from actin and filopodia formation. Phosphorylated by several receptor tyrosine kinases. As to expression, expressed in all tissues analyzed, including heart, brain, placenta, lung, liver, skeletal muscle, kidney and pancreas. Expressed in all epithelial and fibroblastic lines examined and in some, but not all, hematopoietic cells.

The protein resides in the cytoplasm. It localises to the cell cortex. It is found in the cell projection. The protein localises to the ruffle membrane. Its subcellular location is the growth cone. The protein resides in the stereocilium. It localises to the synapse. It is found in the synaptosome. Signaling adapter that controls various cellular protrusions by regulating actin cytoskeleton dynamics and architecture. Depending on its association with other signal transducers, can regulate different processes. Together with SOS1 and ABI1, forms a trimeric complex that participates in transduction of signals from Ras to Rac by activating the Rac-specific guanine nucleotide exchange factor (GEF) activity. Acts as a direct regulator of actin dynamics by binding actin filaments and has both barbed-end actin filament capping and actin bundling activities depending on the context. Displays barbed-end actin capping activity when associated with ABI1, thereby regulating actin-based motility process: capping activity is auto-inhibited and inhibition is relieved upon ABI1 interaction. Also shows actin bundling activity when associated with BAIAP2, enhancing BAIAP2-dependent membrane extensions and promoting filopodial protrusions. Involved in the regulation of processes such as axonal filopodia growth, stereocilia length, dendritic cell migration and cancer cell migration and invasion. Acts as a regulator of axonal filopodia formation in neurons: in the absence of neurotrophic factors, negatively regulates axonal filopodia formation via actin-capping activity. In contrast, it is phosphorylated in the presence of BDNF leading to inhibition of its actin-capping activity and stimulation of filopodia formation. Component of a complex with WHRN and MYO15A that localizes at stereocilia tips and is required for elongation of the stereocilia actin core. Indirectly involved in cell cycle progression; its degradation following ubiquitination being required during G2 phase to promote cell shape changes. The polypeptide is Epidermal growth factor receptor kinase substrate 8 (EPS8) (Homo sapiens (Human)).